Consider the following 395-residue polypeptide: MWGLCKNHFPSNKIQVQERNKALKPKKSGSEHKTKQLFPVFNCKKKEKGVMIRFAILRNANTSLLSARSICLFTQAPTYCHVRLNTLNKSITTKRNSLTESKRHVHDGKHFFTTPHQQQQTKLGEIEEGHSPNIKGEDLRSIGQAITHQRNKRRKQIWSAIFGGIFGVILGYSLIYRVIYLKEQSFLPLFPSSKIRKLSTRDLKKVDVNQVQKLSKLRVLEILSGHDMIKEQYGVPLLDKDGNSPTLNEFSMWCEDQDPCVTGIVMEPDDKRDSSHTWYRIPFVCKWRITHRPISIRGTIDDLLNRIGLETSDLFEIISPERVYGSFKYEYPLQGDSHALHLWFHGEIELDDDSLIVYNGKYHVDVKLQEIDLFRREKNGQLIQYVLYKNEAGDK.

The helical transmembrane segment at 156–176 (QIWSAIFGGIFGVILGYSLIY) threads the bilayer.

Belongs to the AIM39 family.

Its subcellular location is the mitochondrion membrane. The sequence is that of Altered inheritance of mitochondria protein 39, mitochondrial (AIM39) from Saccharomyces cerevisiae (strain RM11-1a) (Baker's yeast).